A 119-amino-acid chain; its full sequence is Immunoglobulin heavy variable 2-70D (119 aa).

A signal peptide spans 1–19 (MDILCSTLLLLTVPSWVLS). The residue at position 20 (Gln20) is a Pyrrolidone carboxylic acid. The tract at residues 20 to 44 (QVTLKESGPALVKPTQTLTLTCTFS) is framework-1. The Ig-like domain occupies 20 to 119 (QVTLKESGPA…DTATYYCARI (100 aa)). A disulfide bridge connects residues Cys41 and Cys116. The segment at 45-54 (GFSLSTSGMR) is complementarity-determining-1. Residues 55 to 71 (VSWIRQPPGKALEWLAR) are framework-2. Residues 72 to 78 (IDWDDDK) form a complementarity-determining-2 region. The tract at residues 79 to 116 (FYSTSLKTRLTISKDTSKNQVVLTMTNMDPVDTATYYC) is framework-3. Residues 117-119 (ARI) are complementarity-determining-3.

As to quaternary structure, immunoglobulins are composed of two identical heavy chains and two identical light chains; disulfide-linked.

Its subcellular location is the secreted. The protein resides in the cell membrane. Functionally, v region of the variable domain of immunoglobulin heavy chains that participates in the antigen recognition. Immunoglobulins, also known as antibodies, are membrane-bound or secreted glycoproteins produced by B lymphocytes. In the recognition phase of humoral immunity, the membrane-bound immunoglobulins serve as receptors which, upon binding of a specific antigen, trigger the clonal expansion and differentiation of B lymphocytes into immunoglobulins-secreting plasma cells. Secreted immunoglobulins mediate the effector phase of humoral immunity, which results in the elimination of bound antigens. The antigen binding site is formed by the variable domain of one heavy chain, together with that of its associated light chain. Thus, each immunoglobulin has two antigen binding sites with remarkable affinity for a particular antigen. The variable domains are assembled by a process called V-(D)-J rearrangement and can then be subjected to somatic hypermutations which, after exposure to antigen and selection, allow affinity maturation for a particular antigen. In Homo sapiens (Human), this protein is Immunoglobulin heavy variable 2-70D.